A 198-amino-acid polypeptide reads, in one-letter code: Na(+)-translocating NADH-quinone reductase subunit E (198 aa).

The next 6 helical transmembrane spans lie at 11–31 (SVFI…FLAV), 35–55 (VSTA…SVPV), 77–97 (FLNF…LEMF), 110–130 (GIFL…SFMV), 140–160 (VVYG…LAGL), and 176–196 (LGIT…FSGI).

Belongs to the NqrDE/RnfAE family. In terms of assembly, composed of six subunits; NqrA, NqrB, NqrC, NqrD, NqrE and NqrF.

It localises to the cell inner membrane. The catalysed reaction is a ubiquinone + n Na(+)(in) + NADH + H(+) = a ubiquinol + n Na(+)(out) + NAD(+). NQR complex catalyzes the reduction of ubiquinone-1 to ubiquinol by two successive reactions, coupled with the transport of Na(+) ions from the cytoplasm to the periplasm. NqrA to NqrE are probably involved in the second step, the conversion of ubisemiquinone to ubiquinol. This is Na(+)-translocating NADH-quinone reductase subunit E from Mannheimia succiniciproducens (strain KCTC 0769BP / MBEL55E).